Here is a 114-residue protein sequence, read N- to C-terminus: Protein preY, mitochondrial (114 aa).

The N-terminal 35 residues, 1–35 (MLSGARCRLASALRGTRAPPSAVARRCLHASGSRP), are a transit peptide targeting the mitochondrion. The disordered stretch occupies residues 14-49 (RGTRAPPSAVARRCLHASGSRPLADRGKKTEEPPRD). Positions 36-49 (LADRGKKTEEPPRD) are enriched in basic and acidic residues. The region spanning 51–97 (DPALLEFLVCPLSKKPLRYEASTNELINEELGIAYPIIDGIPNMIPQ) is the TRM112 domain.

The protein belongs to the PREY family. Interacts (via TRM112 domain) with NDUFAF5; the interaction is direct and stabilizes NDUFAF5 protein. Interacts with COQ5; the interaction is direct, stabilizes COQ5 protein and associates PYURF with COQ enzyme complex.

It localises to the mitochondrion. In terms of biological role, in mitochondria, S-adenosylmethionine-dependent methyltransferase chaperone that supports both coenzyme Q biosynthesis, by stabilizing its components, such as COQ5, and NADH:ubiquinone oxidoreductase complex (complex I, MT-ND1) assembly, by stabilizing complex I assembly factors, such as NDUFAF5. This Homo sapiens (Human) protein is Protein preY, mitochondrial.